A 247-amino-acid polypeptide reads, in one-letter code: 3-deoxy-manno-octulosonate cytidylyltransferase (247 aa).

It belongs to the KdsB family.

It is found in the cytoplasm. It catalyses the reaction 3-deoxy-alpha-D-manno-oct-2-ulosonate + CTP = CMP-3-deoxy-beta-D-manno-octulosonate + diphosphate. Its pathway is nucleotide-sugar biosynthesis; CMP-3-deoxy-D-manno-octulosonate biosynthesis; CMP-3-deoxy-D-manno-octulosonate from 3-deoxy-D-manno-octulosonate and CTP: step 1/1. It participates in bacterial outer membrane biogenesis; lipopolysaccharide biosynthesis. Its function is as follows. Activates KDO (a required 8-carbon sugar) for incorporation into bacterial lipopolysaccharide in Gram-negative bacteria. This Methylorubrum extorquens (strain CM4 / NCIMB 13688) (Methylobacterium extorquens) protein is 3-deoxy-manno-octulosonate cytidylyltransferase.